Reading from the N-terminus, the 672-residue chain is Protein OS-9 (672 aa).

The signal sequence occupies residues 1–26 (MAAEVLLSSLLGLLFLGLLLPARLTG). In terms of domain architecture, MRH spans 108–230 (APCLLKTKDW…TIRTSRLCPH (123 aa)). Residues Cys-110 and Cys-123 are joined by a disulfide bond. Trp-117, Trp-118, and Gln-130 together coordinate a mannooligosaccharide derivative. Asn-177 carries an N-linked (GlcNAc...) asparagine glycan. Disulfide bonds link Cys-181/Cys-216 and Cys-196/Cys-228. A mannooligosaccharide derivative-binding residues include Asp-182, Arg-188, Glu-212, and Tyr-218. Disordered regions lie at residues 261-355 (RQAE…NVQV), 372-452 (KAAE…LLPS), 511-548 (ENQS…RVRV), and 637-672 (EANK…EFDF). Basic and acidic residues-rich tracts occupy residues 263–281 (AESK…DTDR), 294–310 (PKKE…ESEL), 320–338 (AAAR…HEAA), 372–386 (KAAE…REQP), and 394–409 (PQRE…KDGE). Acidic residues predominate over residues 414–435 (MEEEDGDDEEEEEEEEEDEEEQ). The span at 637 to 652 (EANKERQRQSELESNY) shows a compositional bias: basic and acidic residues. Positions 663-672 (DTGDLDEFDF) are enriched in acidic residues.

It belongs to the OS-9 family. Component of the HRD1 complex, which comprises at least SYNV1/HRD1, DERL1/2, FAM8A1, HERPUD1/HERP, OS9, SEL1L and UBE2J1. FAM8A1 is stabilized by interaction with SYNV1, which prevents its proteasomal degradation. OS9 and UBE2J1 recruitment to the complex may be mediated by SEL1L. Through this complex, may interact with ERLEC1 and HSPA5. Interacts (via C-terminus) with CPNE6 (via second C2 domain); this interaction occurs in a calcium-dependent manner in vitro. Interacts with CREB3. Post-translationally, N-glycosylated. Intramolecular disulfide bonds.

The protein resides in the endoplasmic reticulum lumen. Lectin component of the HRD1 complex, which functions in endoplasmic reticulum (ER) quality control and ER-associated degradation (ERAD). Specifically recognizes and binds improperly folded glycoproteins as well as hyperglycosylated proteins, retain them in the ER, and transfers them to the ubiquitination machinery and promote their degradation. Possible targets include TRPV4 as well as hyperglycosylated HSP90B1. The protein is Protein OS-9 (Os9) of Mus musculus (Mouse).